Consider the following 181-residue polypeptide: Adenine phosphoribosyltransferase 1 (181 aa).

Belongs to the purine/pyrimidine phosphoribosyltransferase family. Homodimer.

It localises to the cytoplasm. The catalysed reaction is AMP + diphosphate = 5-phospho-alpha-D-ribose 1-diphosphate + adenine. It participates in purine metabolism; AMP biosynthesis via salvage pathway; AMP from adenine: step 1/1. Its function is as follows. Catalyzes a salvage reaction resulting in the formation of AMP, that is energically less costly than de novo synthesis. This Triticum aestivum (Wheat) protein is Adenine phosphoribosyltransferase 1 (APT1).